The primary structure comprises 225 residues: Glutathione S-transferase U2 (225 aa).

Residues 6 to 85 (ESVKLLGFWI…YIDQTWNNNP (80 aa)) form the GST N-terminal domain. Glutathione-binding positions include 16–17 (SP), 42–43 (KK), 56–57 (KV), and 69–70 (ES). Residues 90–217 (DPYEKAMVRF…EKHIERMKKI (128 aa)) form the GST C-terminal domain. Residue threonine 151 is modified to Phosphothreonine.

It belongs to the GST superfamily. Tau family.

It localises to the cytoplasm. Its subcellular location is the cytosol. It catalyses the reaction RX + glutathione = an S-substituted glutathione + a halide anion + H(+). Its function is as follows. May be involved in the conjugation of reduced glutathione to a wide number of exogenous and endogenous hydrophobic electrophiles and have a detoxification role against certain herbicides. The chain is Glutathione S-transferase U2 (GSTU2) from Arabidopsis thaliana (Mouse-ear cress).